The chain runs to 399 residues: Trimethyllysine dioxygenase (399 aa).

Histidine 214, aspartate 216, and histidine 360 together coordinate Fe cation.

Belongs to the gamma-BBH/TMLD family. The cofactor is Fe(2+). Requires L-ascorbate as cofactor.

The protein localises to the cytoplasm. The enzyme catalyses N(6),N(6),N(6)-trimethyl-L-lysine + 2-oxoglutarate + O2 = (3S)-3-hydroxy-N(6),N(6),N(6)-trimethyl-L-lysine + succinate + CO2. It participates in amine and polyamine biosynthesis; carnitine biosynthesis. In terms of biological role, converts trimethyllysine (TML) into hydroxytrimethyllysine (HTML). The sequence is that of Trimethyllysine dioxygenase from Meyerozyma guilliermondii (strain ATCC 6260 / CBS 566 / DSM 6381 / JCM 1539 / NBRC 10279 / NRRL Y-324) (Yeast).